The primary structure comprises 608 residues: Glutamine--fructose-6-phosphate aminotransferase [isomerizing] (608 aa).

The active-site Nucleophile; for GATase activity is the Cys-2. One can recognise a Glutamine amidotransferase type-2 domain in the interval 2–217 (CGIVGIVGNQ…DGDWAVIGKT (216 aa)). SIS domains follow at residues 281-422 (ISDA…ARGT) and 456-598 (LSRE…VDQP). Lys-603 functions as the For Fru-6P isomerization activity in the catalytic mechanism.

The protein resides in the cytoplasm. It catalyses the reaction D-fructose 6-phosphate + L-glutamine = D-glucosamine 6-phosphate + L-glutamate. Involved in the production of the root hair deformation (HAD) factor specifically on medicago. This Rhizobium meliloti (strain 1021) (Ensifer meliloti) protein is Glutamine--fructose-6-phosphate aminotransferase [isomerizing] (nodM).